A 314-amino-acid polypeptide reads, in one-letter code: Testis-specific Y-encoded protein 4 (314 aa).

This sequence belongs to the nucleosome assembly protein (NAP) family.

The protein localises to the cytoplasm. The protein resides in the nucleus. Functionally, may be involved in sperm differentiation and proliferation. The chain is Testis-specific Y-encoded protein 4 (TSPY4) from Homo sapiens (Human).